Here is a 288-residue protein sequence, read N- to C-terminus: Probable ketoamine kinase VP1481 (288 aa).

92-94 serves as a coordination point for ATP; that stretch reads NYL. Residue aspartate 195 is the Proton acceptor of the active site.

It belongs to the fructosamine kinase family.

Its function is as follows. Ketoamine kinase that phosphorylates ketoamines on the third carbon of the sugar moiety to generate ketoamine 3-phosphate. The protein is Probable ketoamine kinase VP1481 of Vibrio parahaemolyticus serotype O3:K6 (strain RIMD 2210633).